We begin with the raw amino-acid sequence, 269 residues long: NAD kinase (269 aa).

The Proton acceptor role is filled by aspartate 45. NAD(+) contacts are provided by residues 45–46 (DG), 122–123 (NE), arginine 149, aspartate 151, and alanine 186.

Belongs to the NAD kinase family. A divalent metal cation serves as cofactor.

The protein resides in the cytoplasm. It carries out the reaction NAD(+) + ATP = ADP + NADP(+) + H(+). In terms of biological role, involved in the regulation of the intracellular balance of NAD and NADP, and is a key enzyme in the biosynthesis of NADP. Catalyzes specifically the phosphorylation on 2'-hydroxyl of the adenosine moiety of NAD to yield NADP. This is NAD kinase from Staphylococcus aureus (strain Mu3 / ATCC 700698).